A 419-amino-acid polypeptide reads, in one-letter code: Tyrosine--tRNA ligase (419 aa).

Tyr-42 contributes to the L-tyrosine binding site. Positions 47–56 match the 'HIGH' region motif; sequence CTAPSLHVGS. The L-tyrosine site is built by Tyr-179 and Gln-183. The 'KMSKS' region signature appears at 239-243; it reads KMGKT. Lys-242 contacts ATP. One can recognise an S4 RNA-binding domain in the interval 353–419; the sequence is LGVLAAFVKA…RKRHVLLKLV (67 aa).

This sequence belongs to the class-I aminoacyl-tRNA synthetase family. TyrS type 1 subfamily. Homodimer.

It is found in the cytoplasm. It carries out the reaction tRNA(Tyr) + L-tyrosine + ATP = L-tyrosyl-tRNA(Tyr) + AMP + diphosphate + H(+). In terms of biological role, catalyzes the attachment of tyrosine to tRNA(Tyr) in a two-step reaction: tyrosine is first activated by ATP to form Tyr-AMP and then transferred to the acceptor end of tRNA(Tyr). This chain is Tyrosine--tRNA ligase, found in Methylocella silvestris (strain DSM 15510 / CIP 108128 / LMG 27833 / NCIMB 13906 / BL2).